A 265-amino-acid chain; its full sequence is Cytochrome b-c1 complex subunit Rieske, mitochondrial (265 aa).

The transit peptide at 1 to 53 (MLRVAGRRLSSSAARSSSTFFTRSSFTVTDDSSPARSPSPSLTSSFLDQIRGF) directs the protein to the mitochondrion. The Mitochondrial matrix segment spans residues 54 to 102 (SSNSVSPAHQLGLVSDLPATVAAIKNPSSKIVYDDSNHERYPPGDPSKR). A helical transmembrane segment spans residues 103–125 (AFAYFVLTGGRFVYASSVRLLIL). At 126 to 265 (KFVLSMSASK…FLEENKLLIG (140 aa)) the chain is on the mitochondrial intermembrane side. A Rieske domain is found at 175-263 (IKLANSVDLG…YSFLEENKLL (89 aa)). The [2Fe-2S] cluster site is built by cysteine 208, histidine 210, cysteine 227, and histidine 230. Cysteine 213 and cysteine 229 are disulfide-bonded.

This sequence belongs to the Rieske iron-sulfur protein family. Component of the ubiquinol-cytochrome c oxidoreductase (cytochrome b-c1 complex, complex III, CIII), a multisubunit enzyme composed of 3 respiratory subunits cytochrome b, cytochrome c1 and Rieske protein, 2 core protein subunits, and several low-molecular weight protein subunits. The complex exists as an obligatory dimer and forms supercomplexes (SCs) in the inner mitochondrial membrane with cytochrome c oxidase (complex IV, CIV). Requires [2Fe-2S] cluster as cofactor.

The protein localises to the mitochondrion inner membrane. It carries out the reaction a quinol + 2 Fe(III)-[cytochrome c](out) = a quinone + 2 Fe(II)-[cytochrome c](out) + 2 H(+)(out). Functionally, component of the ubiquinol-cytochrome c oxidoreductase, a multisubunit transmembrane complex that is part of the mitochondrial electron transport chain which drives oxidative phosphorylation. The respiratory chain contains 3 multisubunit complexes succinate dehydrogenase (complex II, CII), ubiquinol-cytochrome c oxidoreductase (cytochrome b-c1 complex, complex III, CIII) and cytochrome c oxidase (complex IV, CIV), that cooperate to transfer electrons derived from NADH and succinate to molecular oxygen, creating an electrochemical gradient over the inner membrane that drives transmembrane transport and the ATP synthase. The cytochrome b-c1 complex catalyzes electron transfer from ubiquinol to cytochrome c, linking this redox reaction to translocation of protons across the mitochondrial inner membrane, with protons being carried across the membrane as hydrogens on the quinol. In the process called Q cycle, 2 protons are consumed from the matrix, 4 protons are released into the intermembrane space and 2 electrons are passed to cytochrome c. The Rieske protein is a catalytic core subunit containing a [2Fe-2S] iron-sulfur cluster. It cycles between 2 conformational states during catalysis to transfer electrons from the quinol bound in the Q(0) site in cytochrome b to cytochrome c1. The protein is Cytochrome b-c1 complex subunit Rieske, mitochondrial (FES1) of Solanum tuberosum (Potato).